The following is a 113-amino-acid chain: Large ribosomal subunit protein bL19 (113 aa).

The protein belongs to the bacterial ribosomal protein bL19 family.

In terms of biological role, this protein is located at the 30S-50S ribosomal subunit interface and may play a role in the structure and function of the aminoacyl-tRNA binding site. In Corynebacterium kroppenstedtii (strain DSM 44385 / JCM 11950 / CIP 105744 / CCUG 35717), this protein is Large ribosomal subunit protein bL19.